The following is a 48-amino-acid chain: uncharacterized protein (48 aa).

This is an uncharacterized protein from Saccharomyces cerevisiae (strain ATCC 204508 / S288c) (Baker's yeast).